Reading from the N-terminus, the 285-residue chain is NADPH-dependent 7-cyano-7-deazaguanine reductase (285 aa).

A substrate-binding site is contributed by 80-82; that stretch reads VES. 82–83 contributes to the NADPH binding site; it reads SK. Catalysis depends on Cys191, which acts as the Thioimide intermediate. The active-site Proton donor is the Asp198. 231 to 232 contacts substrate; it reads HE. 260–261 is a binding site for NADPH; sequence RG.

The protein belongs to the GTP cyclohydrolase I family. QueF type 2 subfamily. Homodimer.

The protein localises to the cytoplasm. It catalyses the reaction 7-aminomethyl-7-carbaguanine + 2 NADP(+) = 7-cyano-7-deazaguanine + 2 NADPH + 3 H(+). The protein operates within tRNA modification; tRNA-queuosine biosynthesis. Its function is as follows. Catalyzes the NADPH-dependent reduction of 7-cyano-7-deazaguanine (preQ0) to 7-aminomethyl-7-deazaguanine (preQ1). The polypeptide is NADPH-dependent 7-cyano-7-deazaguanine reductase (Psychrobacter cryohalolentis (strain ATCC BAA-1226 / DSM 17306 / VKM B-2378 / K5)).